A 349-amino-acid polypeptide reads, in one-letter code: 4-hydroxy-3-methylbut-2-en-1-yl diphosphate synthase (flavodoxin) (349 aa).

[4Fe-4S] cluster-binding residues include C264, C267, C299, and E306.

Belongs to the IspG family. Requires [4Fe-4S] cluster as cofactor.

It catalyses the reaction (2E)-4-hydroxy-3-methylbut-2-enyl diphosphate + oxidized [flavodoxin] + H2O + 2 H(+) = 2-C-methyl-D-erythritol 2,4-cyclic diphosphate + reduced [flavodoxin]. It participates in isoprenoid biosynthesis; isopentenyl diphosphate biosynthesis via DXP pathway; isopentenyl diphosphate from 1-deoxy-D-xylulose 5-phosphate: step 5/6. Converts 2C-methyl-D-erythritol 2,4-cyclodiphosphate (ME-2,4cPP) into 1-hydroxy-2-methyl-2-(E)-butenyl 4-diphosphate. This Clostridium acetobutylicum (strain ATCC 824 / DSM 792 / JCM 1419 / IAM 19013 / LMG 5710 / NBRC 13948 / NRRL B-527 / VKM B-1787 / 2291 / W) protein is 4-hydroxy-3-methylbut-2-en-1-yl diphosphate synthase (flavodoxin).